The chain runs to 274 residues: Acyl-[acyl-carrier-protein]--UDP-N-acetylglucosamine O-acyltransferase (274 aa).

It belongs to the transferase hexapeptide repeat family. LpxA subfamily. As to quaternary structure, homotrimer.

It localises to the cytoplasm. The enzyme catalyses a (3R)-hydroxyacyl-[ACP] + UDP-N-acetyl-alpha-D-glucosamine = a UDP-3-O-[(3R)-3-hydroxyacyl]-N-acetyl-alpha-D-glucosamine + holo-[ACP]. It participates in glycolipid biosynthesis; lipid IV(A) biosynthesis; lipid IV(A) from (3R)-3-hydroxytetradecanoyl-[acyl-carrier-protein] and UDP-N-acetyl-alpha-D-glucosamine: step 1/6. Functionally, involved in the biosynthesis of lipid A, a phosphorylated glycolipid that anchors the lipopolysaccharide to the outer membrane of the cell. The polypeptide is Acyl-[acyl-carrier-protein]--UDP-N-acetylglucosamine O-acyltransferase (Bartonella bacilliformis (strain ATCC 35685 / KC583 / Herrer 020/F12,63)).